An 86-amino-acid chain; its full sequence is Neurotoxin homolog NL1 (86 aa).

A signal peptide spans 1 to 21; sequence MKTLLLTLVVVTMVCMDLGYT. Disulfide bonds link Cys24–Cys45, Cys38–Cys62, Cys66–Cys78, and Cys79–Cys84.

This sequence belongs to the three-finger toxin family. Short-chain subfamily. Orphan group VIII (haditoxin) sub-subfamily. Homodimer; non-covalently linked. As to expression, expressed by the venom gland.

It is found in the secreted. Its function is as follows. Antagonist of muscle and neuronal nicotinic acetylcholine receptors (nAChR) with highest affinity for neuronal alpha-7/CHRNA7 nAChRs. In Naja atra (Chinese cobra), this protein is Neurotoxin homolog NL1.